Reading from the N-terminus, the 332-residue chain is DNA-directed RNA polymerase 2A (332 aa).

Residues Asp33, Lys108, and Asp265 contribute to the active site.

The protein belongs to the phage and mitochondrial RNA polymerase family.

It catalyses the reaction RNA(n) + a ribonucleoside 5'-triphosphate = RNA(n+1) + diphosphate. In terms of biological role, DNA-dependent RNA polymerase catalyzes the transcription of DNA into RNA using the four ribonucleoside triphosphates as substrates. The polypeptide is DNA-directed RNA polymerase 2A (RPOT2-SYL) (Nicotiana tabacum (Common tobacco)).